A 67-amino-acid polypeptide reads, in one-letter code: ATP synthase F(0) complex subunit 8 (67 aa).

The helical transmembrane segment at 8–24 threads the bilayer; that stretch reads PWFITILSMIITLFILF. Residue K54 is modified to N6-acetyllysine; alternate. K54 carries the post-translational modification N6-succinyllysine; alternate. K57 is modified (N6-acetyllysine).

The protein belongs to the ATPase protein 8 family. As to quaternary structure, component of the ATP synthase complex composed at least of ATP5F1A/subunit alpha, ATP5F1B/subunit beta, ATP5MC1/subunit c (homooctomer), MT-ATP6/subunit a, MT-ATP8/subunit 8, ATP5ME/subunit e, ATP5MF/subunit f, ATP5MG/subunit g, ATP5MK/subunit k, ATP5MJ/subunit j, ATP5F1C/subunit gamma, ATP5F1D/subunit delta, ATP5F1E/subunit epsilon, ATP5PF/subunit F6, ATP5PB/subunit b, ATP5PD/subunit d, ATP5PO/subunit OSCP. ATP synthase complex consists of a soluble F(1) head domain (subunits alpha(3) and beta(3)) - the catalytic core - and a membrane F(0) domain - the membrane proton channel (subunits c, a, 8, e, f, g, k and j). These two domains are linked by a central stalk (subunits gamma, delta, and epsilon) rotating inside the F1 region and a stationary peripheral stalk (subunits F6, b, d, and OSCP). Interacts with PRICKLE3.

It is found in the mitochondrion membrane. In terms of biological role, subunit 8, of the mitochondrial membrane ATP synthase complex (F(1)F(0) ATP synthase or Complex V) that produces ATP from ADP in the presence of a proton gradient across the membrane which is generated by electron transport complexes of the respiratory chain. ATP synthase complex consist of a soluble F(1) head domain - the catalytic core - and a membrane F(1) domain - the membrane proton channel. These two domains are linked by a central stalk rotating inside the F(1) region and a stationary peripheral stalk. During catalysis, ATP synthesis in the catalytic domain of F(1) is coupled via a rotary mechanism of the central stalk subunits to proton translocation. In vivo, can only synthesize ATP although its ATP hydrolase activity can be activated artificially in vitro. Part of the complex F(0) domain. This chain is ATP synthase F(0) complex subunit 8, found in Orycteropus afer (Aardvark).